The sequence spans 165 residues: PTS system glucose-specific EIIA component (165 aa).

The PTS EIIA type-1 domain occupies 33 to 137; that stretch reads DPVFAGRMMG…STITPIVITN (105 aa). Zn(2+) is bound by residues H70 and H85. Catalysis depends on H85, which acts as the Tele-phosphohistidine intermediate; for EIIA activity. Residue H85 is modified to Phosphohistidine; by HPr.

In terms of assembly, heterodimer with glycerol kinase (glpk). Requires Zn(2+) as cofactor.

The protein localises to the cytoplasm. Functionally, the phosphoenolpyruvate-dependent sugar phosphotransferase system (sugar PTS), a major carbohydrate active transport system, catalyzes the phosphorylation of incoming sugar substrates concomitantly with their translocation across the cell membrane. The enzyme II complex composed of PtsG and Crr is involved in glucose transport. The chain is PTS system glucose-specific EIIA component (crr) from Bacillus cereus (strain ATCC 14579 / DSM 31 / CCUG 7414 / JCM 2152 / NBRC 15305 / NCIMB 9373 / NCTC 2599 / NRRL B-3711).